Reading from the N-terminus, the 146-residue chain is Hemoglobin subunit beta-1/2 (146 aa).

A Globin domain is found at 2–146 (EWTDKERSII…VVSALGKQYH (145 aa)). Heme b contacts are provided by His-63 and His-92.

It belongs to the globin family. As to quaternary structure, hb1 is a heterotetramer of two alpha-1 chains and two beta chains. Hb2 is a heterotetramer of two alpha-2 chains and two beta chains. As to expression, red blood cells.

Its function is as follows. Involved in oxygen transport from gills to the various peripheral tissues. The protein is Hemoglobin subunit beta-1/2 of Trematomus newnesi (Dusky notothen).